Consider the following 553-residue polypeptide: Glucose-6-phosphate isomerase (553 aa).

Residues 164–165 (GS), 215–220 (SKTFTT), Q359, E363, H394, and K516 each bind D-glucose 6-phosphate. The Proton donor role is filled by E363. Catalysis depends on residues H394 and K516.

This sequence belongs to the GPI family. As to quaternary structure, homodimer.

It localises to the cytoplasm. The protein localises to the cytosol. It carries out the reaction alpha-D-glucose 6-phosphate = beta-D-fructose 6-phosphate. Its pathway is carbohydrate degradation; glycolysis; D-glyceraldehyde 3-phosphate and glycerone phosphate from D-glucose: step 2/4. In the cytoplasm, catalyzes the conversion of glucose-6-phosphate to fructose-6-phosphate, the second step in glycolysis, and the reverse reaction during gluconeogenesis. The protein is Glucose-6-phosphate isomerase (pgiA) of Aspergillus oryzae (strain ATCC 42149 / RIB 40) (Yellow koji mold).